Reading from the N-terminus, the 421-residue chain is tRNA(Ile)-lysidine synthase (421 aa).

26 to 31 (SGGADS) serves as a coordination point for ATP.

This sequence belongs to the tRNA(Ile)-lysidine synthase family.

It is found in the cytoplasm. The catalysed reaction is cytidine(34) in tRNA(Ile2) + L-lysine + ATP = lysidine(34) in tRNA(Ile2) + AMP + diphosphate + H(+). Ligates lysine onto the cytidine present at position 34 of the AUA codon-specific tRNA(Ile) that contains the anticodon CAU, in an ATP-dependent manner. Cytidine is converted to lysidine, thus changing the amino acid specificity of the tRNA from methionine to isoleucine. This is tRNA(Ile)-lysidine synthase from Streptococcus thermophilus (strain CNRZ 1066).